Consider the following 780-residue polypeptide: Exocyst complex component 3-like protein (780 aa).

It belongs to the SEC6 family.

The protein localises to the cytoplasmic vesicle. It is found in the secretory vesicle. As part of the exocyst, may play a role in regulated exocytosis. This is Exocyst complex component 3-like protein (exoc3l1) from Danio rerio (Zebrafish).